A 127-amino-acid polypeptide reads, in one-letter code: Small ribosomal subunit protein uS11 (127 aa).

It belongs to the universal ribosomal protein uS11 family. Part of the 30S ribosomal subunit. Interacts with proteins S7 and S18. Binds to IF-3.

Functionally, located on the platform of the 30S subunit, it bridges several disparate RNA helices of the 16S rRNA. Forms part of the Shine-Dalgarno cleft in the 70S ribosome. This is Small ribosomal subunit protein uS11 from Flavobacterium johnsoniae (strain ATCC 17061 / DSM 2064 / JCM 8514 / BCRC 14874 / CCUG 350202 / NBRC 14942 / NCIMB 11054 / UW101) (Cytophaga johnsonae).